The chain runs to 70 residues: MKKGIHPNYAEVTAKCSCGNEIKTRSTVGHDLNLDVCGNCHPFYTGKQRDVASGGRVDRFNKRFSIPGSK.

Zn(2+) contacts are provided by Cys-16, Cys-18, Cys-37, and Cys-40.

It belongs to the bacterial ribosomal protein bL31 family. Type A subfamily. In terms of assembly, part of the 50S ribosomal subunit. Requires Zn(2+) as cofactor.

Binds the 23S rRNA. The sequence is that of Large ribosomal subunit protein bL31 from Erwinia tasmaniensis (strain DSM 17950 / CFBP 7177 / CIP 109463 / NCPPB 4357 / Et1/99).